Reading from the N-terminus, the 379-residue chain is Salicylate/benzoate carboxyl methyltransferase (379 aa).

Tyrosine 40 provides a ligand contact to S-adenosyl-L-homocysteine. Residue glutamine 47 participates in salicylate binding. The S-adenosyl-L-homocysteine site is built by cysteine 82, asparagine 87, aspartate 119, leucine 120, serine 155, and phenylalanine 156. 2 residues coordinate salicylate: histidine 176 and tryptophan 177. Asparagine 188, aspartate 275, phenylalanine 277, and asparagine 278 together coordinate Mg(2+).

This sequence belongs to the methyltransferase superfamily. Type-7 methyltransferase family. SABATH subfamily. In terms of assembly, homodimer. It depends on Mg(2+) as a cofactor. In terms of tissue distribution, expressed in flowers and at lower levels in leaves and stems. Hardly detected in roots and siliques. Expressed in the sepals and the leaf trichomes and hydathodes.

The catalysed reaction is benzoate + S-adenosyl-L-methionine = methyl benzoate + S-adenosyl-L-homocysteine. It catalyses the reaction salicylate + S-adenosyl-L-methionine = methyl salicylate + S-adenosyl-L-homocysteine. Its function is as follows. Methyltransferase involved in the biosynthesis of methylsalicylate in response to stresses. Utilizes salicylic acid (SA) more efficiently than benzoic acid (BA). Can also use anthranilic acid and m-hydroxybenzoic acid as substrate. The protein is Salicylate/benzoate carboxyl methyltransferase (BSMT1) of Arabidopsis thaliana (Mouse-ear cress).